A 429-amino-acid chain; its full sequence is Enolase (429 aa).

Glutamine 164 lines the (2R)-2-phosphoglycerate pocket. The Proton donor role is filled by glutamate 206. The Mg(2+) site is built by aspartate 243, glutamate 286, and aspartate 313. (2R)-2-phosphoglycerate-binding residues include lysine 338, arginine 367, serine 368, and lysine 389. Catalysis depends on lysine 338, which acts as the Proton acceptor.

Belongs to the enolase family. The cofactor is Mg(2+).

Its subcellular location is the cytoplasm. It is found in the secreted. The protein resides in the cell surface. It carries out the reaction (2R)-2-phosphoglycerate = phosphoenolpyruvate + H2O. It functions in the pathway carbohydrate degradation; glycolysis; pyruvate from D-glyceraldehyde 3-phosphate: step 4/5. Catalyzes the reversible conversion of 2-phosphoglycerate (2-PG) into phosphoenolpyruvate (PEP). It is essential for the degradation of carbohydrates via glycolysis. The polypeptide is Enolase (Thermosipho melanesiensis (strain DSM 12029 / CIP 104789 / BI429)).